The following is a 103-amino-acid chain: Integration host factor subunit alpha (103 aa).

Belongs to the bacterial histone-like protein family. As to quaternary structure, heterodimer of an alpha and a beta chain.

In terms of biological role, this protein is one of the two subunits of integration host factor, a specific DNA-binding protein that functions in genetic recombination as well as in transcriptional and translational control. In Aromatoleum aromaticum (strain DSM 19018 / LMG 30748 / EbN1) (Azoarcus sp. (strain EbN1)), this protein is Integration host factor subunit alpha.